The following is an 82-amino-acid chain: MDITPALFEHAVFSNRNSGLPEPLHGRDGLCWPRHPPDALCLRCGVIEAGHWQYSLYPWENLCPFSAYRSLFFSQSSPPLAV.

This is an uncharacterized protein from Archaeoglobus fulgidus (strain ATCC 49558 / DSM 4304 / JCM 9628 / NBRC 100126 / VC-16).